Consider the following 246-residue polypeptide: Acetoacetate decarboxylase (246 aa).

The Schiff-base intermediate with acetoacetate role is filled by Lys116.

It belongs to the ADC family.

The enzyme catalyses acetoacetate + H(+) = acetone + CO2. Functionally, catalyzes the conversion of acetoacetate to acetone and carbon dioxide. The protein is Acetoacetate decarboxylase of Burkholderia cenocepacia (strain HI2424).